Reading from the N-terminus, the 250-residue chain is Transcriptional activator protein EchR (250 aa).

The 66-residue stretch at 173 to 238 (KSQEPNIFSQ…HAIRLGVEMN (66 aa)) folds into the HTH luxR-type domain. Residues 197-216 (YQEIALILGITTSTVKFHIG) constitute a DNA-binding region (H-T-H motif).

The protein belongs to the autoinducer-regulated transcriptional regulatory protein family.

Its function is as follows. Functions as a potential ohlL-responsive transcriptional regulator. In Dickeya chrysanthemi (Pectobacterium chrysanthemi), this protein is Transcriptional activator protein EchR (echR).